The following is a 403-amino-acid chain: Phosphoglycerate kinase (403 aa).

Residues 22 to 24 (DLN), arginine 37, 60 to 63 (HLGN), arginine 119, and arginine 152 contribute to the substrate site. Residues lysine 202, glutamate 325, and 355–358 (GGDT) each bind ATP.

It belongs to the phosphoglycerate kinase family. As to quaternary structure, monomer.

The protein resides in the cytoplasm. The enzyme catalyses (2R)-3-phosphoglycerate + ATP = (2R)-3-phospho-glyceroyl phosphate + ADP. It participates in carbohydrate degradation; glycolysis; pyruvate from D-glyceraldehyde 3-phosphate: step 2/5. This is Phosphoglycerate kinase from Orientia tsutsugamushi (strain Boryong) (Rickettsia tsutsugamushi).